The chain runs to 236 residues: tRNA (guanine-N(7)-)-methyltransferase (236 aa).

S-adenosyl-L-methionine-binding residues include Asp35, Glu60, Asn87, and Asp113. Residue Asp113 is part of the active site. Substrate is bound by residues Lys117 and Asp149.

Belongs to the class I-like SAM-binding methyltransferase superfamily. TrmB family.

The enzyme catalyses guanosine(46) in tRNA + S-adenosyl-L-methionine = N(7)-methylguanosine(46) in tRNA + S-adenosyl-L-homocysteine. It participates in tRNA modification; N(7)-methylguanine-tRNA biosynthesis. Functionally, catalyzes the formation of N(7)-methylguanine at position 46 (m7G46) in tRNA. The protein is tRNA (guanine-N(7)-)-methyltransferase of Prochlorococcus marinus (strain MIT 9303).